Reading from the N-terminus, the 198-residue chain is Segregation and condensation protein B (198 aa).

The tract at residues 167–198 (PKLADPEADDPDQNEMDLFFDRFNQSKEQEEE) is disordered. The segment covering 172–181 (PEADDPDQNE) has biased composition (acidic residues).

It belongs to the ScpB family. As to quaternary structure, homodimer. Homodimerization may be required to stabilize the binding of ScpA to the Smc head domains. Component of a cohesin-like complex composed of ScpA, ScpB and the Smc homodimer, in which ScpA and ScpB bind to the head domain of Smc. The presence of the three proteins is required for the association of the complex with DNA.

It is found in the cytoplasm. Its function is as follows. Participates in chromosomal partition during cell division. May act via the formation of a condensin-like complex containing Smc and ScpA that pull DNA away from mid-cell into both cell halves. This Listeria welshimeri serovar 6b (strain ATCC 35897 / DSM 20650 / CCUG 15529 / CIP 8149 / NCTC 11857 / SLCC 5334 / V8) protein is Segregation and condensation protein B.